The chain runs to 118 residues: Large ribosomal subunit protein bL19 (118 aa).

Belongs to the bacterial ribosomal protein bL19 family.

Functionally, this protein is located at the 30S-50S ribosomal subunit interface and may play a role in the structure and function of the aminoacyl-tRNA binding site. The sequence is that of Large ribosomal subunit protein bL19 from Teredinibacter turnerae (strain ATCC 39867 / T7901).